The sequence spans 348 residues: Isopentenyl-diphosphate delta-isomerase (348 aa).

Residue 9 to 10 (RK) participates in substrate binding. FMN is bound by residues 68 to 70 (AMT), Ser-98, and Asn-127. Gln-157 contacts substrate. Glu-158 provides a ligand contact to Mg(2+). Residues Lys-188, Ser-213, Thr-218, and 286–287 (AG) contribute to the FMN site.

This sequence belongs to the IPP isomerase type 2 family. In terms of assembly, homooctamer. Dimer of tetramers. FMN is required as a cofactor. NADPH serves as cofactor. It depends on Mg(2+) as a cofactor.

The protein resides in the cytoplasm. The enzyme catalyses isopentenyl diphosphate = dimethylallyl diphosphate. Its function is as follows. Involved in the biosynthesis of isoprenoids. Catalyzes the 1,3-allylic rearrangement of the homoallylic substrate isopentenyl (IPP) to its allylic isomer, dimethylallyl diphosphate (DMAPP). In Limosilactobacillus reuteri subsp. reuteri (strain JCM 1112) (Lactobacillus reuteri), this protein is Isopentenyl-diphosphate delta-isomerase.